The primary structure comprises 79 residues: Cytochrome b (79 aa).

The next 3 membrane-spanning stretches (helical) occupy residues 1-7 (SALFLAM), 31-52 (WLIR…YLHI), and 67-79 (WNIG…LTMA). 2 residues coordinate heme b: His-37 and His-51.

It belongs to the cytochrome b family. As to quaternary structure, the cytochrome bc1 complex contains 11 subunits: 3 respiratory subunits (MT-CYB, CYC1 and UQCRFS1), 2 core proteins (UQCRC1 and UQCRC2) and 6 low-molecular weight proteins (UQCRH/QCR6, UQCRB/QCR7, UQCRQ/QCR8, UQCR10/QCR9, UQCR11/QCR10 and a cleavage product of UQCRFS1). This cytochrome bc1 complex then forms a dimer. Heme b serves as cofactor.

It localises to the mitochondrion inner membrane. Functionally, component of the ubiquinol-cytochrome c reductase complex (complex III or cytochrome b-c1 complex) that is part of the mitochondrial respiratory chain. The b-c1 complex mediates electron transfer from ubiquinol to cytochrome c. Contributes to the generation of a proton gradient across the mitochondrial membrane that is then used for ATP synthesis. In Dipodomys panamintinus (Panamint kangaroo rat), this protein is Cytochrome b (MT-CYB).